Consider the following 84-residue polypeptide: Small ribosomal subunit protein uS17 (84 aa).

The protein belongs to the universal ribosomal protein uS17 family. Part of the 30S ribosomal subunit.

In terms of biological role, one of the primary rRNA binding proteins, it binds specifically to the 5'-end of 16S ribosomal RNA. In Buchnera aphidicola subsp. Cinara cedri (strain Cc), this protein is Small ribosomal subunit protein uS17.